A 254-amino-acid polypeptide reads, in one-letter code: MAQPFEDWYKNLPIVTKIYMTGCVVTSVSVYLGLVGPLRLYLNFPLVFGKYEFWRLFTNFFFYDEIGMNFFFHMYFLVRHSRLLEESSFRGRSADYLFMWIFGSFLLLIMDAFLFYTKIVTKVLFLAPSIAFMVIYVWSRRNPNMHISFLGLFTFSAPYLPWVILIMGYLFNHDLTTDLLGAVAGHAYYFLEDAYPLISNRRLLKTPGFLKNLMDGQEQPIVDAHQQQEVQQAQQQEVQQPVQNFLNEDDLDQQ.

At 1–17 (MAQPFEDWYKNLPIVTK) the chain is on the cytoplasmic side. A helical transmembrane segment spans residues 18 to 38 (IYMTGCVVTSVSVYLGLVGPL). Over 39-95 (RLYLNFPLVFGKYEFWRLFTNFFFYDEIGMNFFFHMYFLVRHSRLLEESSFRGRSAD) the chain is Lumenal. Residues 96–116 (YLFMWIFGSFLLLIMDAFLFY) form a helical membrane-spanning segment. Over 117–118 (TK) the chain is Cytoplasmic. A helical transmembrane segment spans residues 119-139 (IVTKVLFLAPSIAFMVIYVWS). Residues 140 to 146 (RRNPNMH) are Lumenal-facing. The chain crosses the membrane as a helical span at residues 147-167 (ISFLGLFTFSAPYLPWVILIM). The Cytoplasmic segment spans residues 168–254 (GYLFNHDLTT…FLNEDDLDQQ (87 aa)).

The protein belongs to the derlin family.

The protein resides in the endoplasmic reticulum membrane. In terms of biological role, may be involved in the degradation process of specific misfolded endoplasmic reticulum (ER) luminal proteins. May also be involved in endoplasmic reticulum stress-induced pre-emptive quality control, a mechanism that selectively attenuates the translocation of newly synthesized proteins into the endoplasmic reticulum and reroutes them to the cytosol for proteasomal degradation. The polypeptide is Probable derlin-2 homolog (derl2) (Dictyostelium discoideum (Social amoeba)).